Here is a 160-residue protein sequence, read N- to C-terminus: Transcription antitermination protein NusB (160 aa).

This sequence belongs to the NusB family.

Its function is as follows. Involved in transcription antitermination. Required for transcription of ribosomal RNA (rRNA) genes. Binds specifically to the boxA antiterminator sequence of the ribosomal RNA (rrn) operons. This chain is Transcription antitermination protein NusB, found in Rhizobium leguminosarum bv. trifolii (strain WSM2304).